The primary structure comprises 104 residues: Large ribosomal subunit protein bL21 (104 aa).

Belongs to the bacterial ribosomal protein bL21 family. Part of the 50S ribosomal subunit. Contacts protein L20.

Its function is as follows. This protein binds to 23S rRNA in the presence of protein L20. The chain is Large ribosomal subunit protein bL21 from Clostridium botulinum (strain ATCC 19397 / Type A).